The sequence spans 306 residues: Non-specific ribonucleoside hydrolase RihC (306 aa).

Residue His235 is part of the active site.

Belongs to the IUNH family. RihC subfamily.

Its function is as follows. Hydrolyzes both purine and pyrimidine ribonucleosides with a broad-substrate specificity. The sequence is that of Non-specific ribonucleoside hydrolase RihC from Salmonella typhi.